A 471-amino-acid polypeptide reads, in one-letter code: Cell division protein FtsP (471 aa).

Residues 1–27 constitute a signal peptide (tat-type signal); the sequence is MSLNRRQFIQASGLALCAGMTPLAAKA. In terms of domain architecture, Plastocyanin-like spans 229–287; sequence VRLRLLNASNSRRYVMRLSDGRAMNVIASDQGLLPAPMAVNQLSLAPGERREILIDMSQ.

Belongs to the FtsP family. In terms of processing, predicted to be exported by the Tat system. The position of the signal peptide cleavage has not been experimentally proven.

Its subcellular location is the periplasm. Its function is as follows. Cell division protein that is required for growth during stress conditions. May be involved in protecting or stabilizing the divisomal assembly under conditions of stress. This chain is Cell division protein FtsP, found in Pectobacterium atrosepticum (strain SCRI 1043 / ATCC BAA-672) (Erwinia carotovora subsp. atroseptica).